A 75-amino-acid polypeptide reads, in one-letter code: Small ribosomal subunit protein bS18 (75 aa).

This sequence belongs to the bacterial ribosomal protein bS18 family. As to quaternary structure, part of the 30S ribosomal subunit. Forms a tight heterodimer with protein bS6.

Functionally, binds as a heterodimer with protein bS6 to the central domain of the 16S rRNA, where it helps stabilize the platform of the 30S subunit. The sequence is that of Small ribosomal subunit protein bS18 from Teredinibacter turnerae (strain ATCC 39867 / T7901).